Reading from the N-terminus, the 166-residue chain is Large ribosomal subunit protein uL10 (166 aa).

The protein belongs to the universal ribosomal protein uL10 family. Part of the ribosomal stalk of the 50S ribosomal subunit. The N-terminus interacts with L11 and the large rRNA to form the base of the stalk. The C-terminus forms an elongated spine to which L12 dimers bind in a sequential fashion forming a multimeric L10(L12)X complex.

Its function is as follows. Forms part of the ribosomal stalk, playing a central role in the interaction of the ribosome with GTP-bound translation factors. This chain is Large ribosomal subunit protein uL10, found in Staphylococcus aureus (strain JH1).